A 658-amino-acid chain; its full sequence is Pentatricopeptide repeat-containing protein At1g69290 (658 aa).

2 disordered regions span residues 1 to 23 (MFRK…ESPS) and 39 to 61 (TLSP…KSSF). Residues 50–61 (PKTLTPDQKSSF) are compositionally biased toward polar residues. 11 PPR repeats span residues 214–249 (DLVA…GVKP), 250–284 (DELS…GFAS), 285–320 (RRIL…GEES), 323–353 (SVET…AQKL), 361–395 (DSSV…GGGS), 397–431 (GIGV…GLQL), 432–466 (DVEI…RVVD), 467–497 (LKGS…VVED), 503–537 (NSHD…RYEP), 538–568 (NNQT…IKGK), and 581–615 (DHAL…KIFV).

It belongs to the PPR family. P subfamily.

In Arabidopsis thaliana (Mouse-ear cress), this protein is Pentatricopeptide repeat-containing protein At1g69290.